The chain runs to 159 residues: 18.0 kDa class I heat shock protein (159 aa).

One can recognise a sHSP domain in the interval 45 to 159 (ETAAFANTHI…PEVKSIHISG (115 aa)).

It belongs to the small heat shock protein (HSP20) family. As to quaternary structure, forms oligomeric structures.

The protein localises to the cytoplasm. In Daucus carota (Wild carrot), this protein is 18.0 kDa class I heat shock protein.